Consider the following 171-residue polypeptide: MKDRNASAEPVVKPGLSPSRFVKVFMHGEPFGRKINLALHNNYDSLSFTLKKLGNNYSMSPFELEGLVNKEEDGAIDSDFDLLYDDMDGVRYFLGDVPWEVFTTTVKKIYIVPAEQQNENDYQEEEEDNAAAAATADEDGDGAAADDGVAAAADDVDDVAGYTSNDDPSFD.

In terms of domain architecture, PB1 spans 19-114; it reads SRFVKVFMHG…TVKKIYIVPA (96 aa). Residues 117–171 form a disordered region; it reads QNENDYQEEEEDNAAAAATADEDGDGAAADDGVAAAADDVDDVAGYTSNDDPSFD. Over residues 142-153 the composition is skewed to low complexity; it reads GAAADDGVAAAA. Residues 162–171 show a composition bias toward polar residues; it reads YTSNDDPSFD.

It belongs to the Aux/IAA family. As to quaternary structure, homodimers and heterodimers.

Its subcellular location is the nucleus. In terms of biological role, aux/IAA proteins are short-lived transcriptional factors that function as repressors of early auxin response genes at low auxin concentrations. The protein is Putative auxin-responsive protein IAA29 (IAA29) of Oryza sativa subsp. japonica (Rice).